The sequence spans 175 residues: Epididymal-specific lipocalin-8 (175 aa).

The N-terminal stretch at 1-22 (MEARLLSNVCGFFLVFLLQAES) is a signal peptide. 2 N-linked (GlcNAc...) asparagine glycosylation sites follow: N66 and N74. C79 and C166 are joined by a disulfide.

The protein belongs to the calycin superfamily. Lipocalin family. As to expression, predominantly expressed in epididymis.

It localises to the secreted. Its function is as follows. May play a role in male fertility. May act as a retinoid carrier protein within the epididymis. The chain is Epididymal-specific lipocalin-8 (Lcn8) from Mus musculus (Mouse).